The following is a 225-amino-acid chain: Thymidylate kinase (225 aa).

ATP is bound at residue 10-17; the sequence is GVEGGGKT.

This sequence belongs to the thymidylate kinase family.

It carries out the reaction dTMP + ATP = dTDP + ADP. Phosphorylation of dTMP to form dTDP in both de novo and salvage pathways of dTTP synthesis. The protein is Thymidylate kinase of Trichodesmium erythraeum (strain IMS101).